The following is a 598-amino-acid chain: DNA polymerase alpha subunit B (598 aa).

The segment covering 112-140 (SYTTPSKGSQKRAISTPETPLTKRSVSTR) has biased composition (polar residues). A disordered region spans residues 112 to 167 (SYTTPSKGSQKRAISTPETPLTKRSVSTRSPHQLLSPSSFSPSATPSQKYNSRSNR). S126 is modified (phosphoserine). Phosphothreonine is present on residues T127 and T130. 4 positions are modified to phosphoserine: S141, S147, S152, and S154. The segment covering 141 to 158 (SPHQLLSPSSFSPSATPS) has biased composition (low complexity).

It belongs to the DNA polymerase alpha subunit B family. Component of the alpha DNA polymerase complex (also known as the alpha DNA polymerase-primase complex) consisting of four subunits: the catalytic subunit POLA1, the regulatory subunit POLA2, and primase complex subunits PRIM1 and PRIM2 respectively. Within the complex, POLA1 directly interacts with PRIM2/p58. Phosphorylated in a cell cycle-dependent manner, in G2/M phase.

It localises to the nucleus. Functionally, accessory subunit of the DNA polymerase alpha complex (also known as the alpha DNA polymerase-primase complex) which plays an essential role in the initiation of DNA synthesis. During the S phase of the cell cycle, the DNA polymerase alpha complex (composed of a catalytic subunit POLA1, an accessory subunit POLA2 and two primase subunits, the catalytic subunit PRIM1 and the regulatory subunit PRIM2) is recruited to DNA at the replicative forks via direct interactions with MCM10 and WDHD1. The primase subunit of the polymerase alpha complex initiates DNA synthesis by oligomerising short RNA primers on both leading and lagging strands. These primers are initially extended by the polymerase alpha catalytic subunit and subsequently transferred to polymerase delta and polymerase epsilon for processive synthesis on the lagging and leading strand, respectively. This Homo sapiens (Human) protein is DNA polymerase alpha subunit B (POLA2).